The following is a 301-amino-acid chain: Bifunctional dTDP-4-dehydrorhamnose 3,5-epimerase/dTDP-4-dehydrorhamnose reductase (301 aa).

NADPH-binding positions include 23-24, 69-71, and Tyr111; these read WI and GVT.

This sequence belongs to the dTDP-4-dehydrorhamnose reductase family. Expressed in roots, leaves, stems and flowers.

The enzyme catalyses dTDP-4-dehydro-6-deoxy-alpha-D-glucose = dTDP-4-dehydro-beta-L-rhamnose. It carries out the reaction dTDP-beta-L-rhamnose + NADP(+) = dTDP-4-dehydro-beta-L-rhamnose + NADPH + H(+). It participates in carbohydrate biosynthesis; dTDP-L-rhamnose biosynthesis. Its function is as follows. Bifunctional enzyme involved in dTDP-beta-L-rhamnose biosynthesis. Catalyzes the epimerization of the C3' and C5'positions of dTDP-6-deoxy-4-keto-alpha-D-glucose to form dTDP-4-keto-beta-L-rhamnose and its reduction to yield dTDP-beta-L-rhamnose. Can form UDP-beta-L-rhamnose from UDP-6-deoxy-4-keto-alpha-D-glucose, but cannot convert GDP-4-dehydro-6-deoxy-D-mannose to GDP-fucose. The polypeptide is Bifunctional dTDP-4-dehydrorhamnose 3,5-epimerase/dTDP-4-dehydrorhamnose reductase (Arabidopsis thaliana (Mouse-ear cress)).